Here is a 425-residue protein sequence, read N- to C-terminus: UPF0761 membrane protein XC_3370 (425 aa).

A run of 6 helical transmembrane segments spans residues Val-48–Phe-68, Phe-105–Glu-125, Gly-154–Phe-174, Leu-182–Ile-202, Ala-216–Phe-236, and Ala-250–Leu-270.

This sequence belongs to the UPF0761 family.

Its subcellular location is the cell inner membrane. In Xanthomonas campestris pv. campestris (strain 8004), this protein is UPF0761 membrane protein XC_3370.